Here is a 243-residue protein sequence, read N- to C-terminus: Probable fructoselysine utilization operon transcriptional repressor (243 aa).

An HTH gntR-type domain is found at 10 to 78 (QLLYATVRQR…QGKGTFVQSQ (69 aa)). The segment at residues 38-57 (ENELCTQYNVSRITIRKAIS) is a DNA-binding region (H-T-H motif).

It functions in the pathway carbohydrate metabolism; fructoselysine degradation [regulation]. In terms of biological role, may regulate the transcription of the frlABCDR operon, involved in the utilization of fructoselysine and psicoselysine. The chain is Probable fructoselysine utilization operon transcriptional repressor (frlR) from Escherichia coli O157:H7.